Consider the following 524-residue polypeptide: Histidine ammonia-lyase (524 aa).

The 5-imidazolinone (Ala-Gly) cross-link spans 139–141 (ASG). A 2,3-didehydroalanine (Ser) modification is found at S140. A disordered region spans residues 500 to 524 (ADTQAPAPAKLPDSGDEDRDTTSRH).

This sequence belongs to the PAL/histidase family. Post-translationally, contains an active site 4-methylidene-imidazol-5-one (MIO), which is formed autocatalytically by cyclization and dehydration of residues Ala-Ser-Gly.

It is found in the cytoplasm. The catalysed reaction is L-histidine = trans-urocanate + NH4(+). The protein operates within amino-acid degradation; L-histidine degradation into L-glutamate; N-formimidoyl-L-glutamate from L-histidine: step 1/3. The protein is Histidine ammonia-lyase (hutH) of Deinococcus radiodurans (strain ATCC 13939 / DSM 20539 / JCM 16871 / CCUG 27074 / LMG 4051 / NBRC 15346 / NCIMB 9279 / VKM B-1422 / R1).